A 241-amino-acid chain; its full sequence is Uridylate kinase (241 aa).

ATP is bound at residue 15-18; the sequence is KLSG. Positions 23-28 are involved in allosteric activation by GTP; the sequence is GTEGFG. Gly-57 contacts UMP. The ATP site is built by Gly-58 and Arg-62. UMP is bound by residues Asp-77 and 138-145; that span reads TGNPFFTT. 3 residues coordinate ATP: Thr-165, Tyr-171, and Asp-174.

Belongs to the UMP kinase family. As to quaternary structure, homohexamer.

Its subcellular location is the cytoplasm. It carries out the reaction UMP + ATP = UDP + ADP. It functions in the pathway pyrimidine metabolism; CTP biosynthesis via de novo pathway; UDP from UMP (UMPK route): step 1/1. Its activity is regulated as follows. Allosterically activated by GTP. Inhibited by UTP. Functionally, catalyzes the reversible phosphorylation of UMP to UDP. The protein is Uridylate kinase of Pectobacterium atrosepticum (strain SCRI 1043 / ATCC BAA-672) (Erwinia carotovora subsp. atroseptica).